Consider the following 271-residue polypeptide: Large ribosomal subunit protein uL3c (271 aa).

The transit peptide at 1–49 directs the protein to the chloroplast; sequence MAIAMAVVSFPSLLNKTTLSSSLFTPTFLPAKSSSLLIKSSPKTRFVVS. The interval 190–222 is disordered; it reads HGSKSHRALGSIGAGTTPGRVYKGKKMPGRMGG.

Belongs to the universal ribosomal protein uL3 family. As to quaternary structure, part of the 50S ribosomal subunit.

It is found in the plastid. The protein localises to the chloroplast. In terms of biological role, one of the primary rRNA binding proteins, it binds directly near the 3'-end of the 23S rRNA, where it nucleates assembly of the 50S subunit. In Arabidopsis thaliana (Mouse-ear cress), this protein is Large ribosomal subunit protein uL3c (RPL3A).